We begin with the raw amino-acid sequence, 445 residues long: Fibrinogen gamma chain (445 aa).

A signal peptide spans 1–25 (MNWSLQLRSFILCWALLLLSPTGLA). Asn-78 carries N-linked (GlcNAc...) asparagine glycosylation. The Fibrinogen C-terminal domain maps to 170-416 (RIHDTTGKDC…ETTMKIIPFN (247 aa)). Cys-179 and Cys-208 are disulfide-bonded. Positions 344, 346, and 350 each coordinate Ca(2+). Cys-352 and Cys-365 are disulfide-bonded. The gamma-chain polymerization, binding amino end of another fibrin alpha chain stretch occupies residues 400 to 422 (TRWYSMKETTMKIIPFNRLSIGD). Gln-424 is covalently cross-linked (Isoglutamyl lysine isopeptide (Gln-Lys) (interchain with K-432)). A disordered region spans residues 424 to 445 (QQHHMGGSKQVSVEHEVDVEYP). Ser-431 is subject to Phosphoserine. Residue Lys-432 forms an Isoglutamyl lysine isopeptide (Lys-Gln) (interchain with Q-424) linkage. The span at 435–445 (SVEHEVDVEYP) shows a compositional bias: basic and acidic residues.

As to quaternary structure, heterohexamer; disulfide linked. Contains 2 sets of 3 non-identical chains (alpha, beta and gamma). The 2 heterotrimers are in head to head conformation with the N-termini in a small central domain. Post-translationally, conversion of fibrinogen to fibrin is triggered by thrombin, which cleaves fibrinopeptides A and B from alpha and beta chains, and thus exposes the N-terminal polymerization sites responsible for the formation of the soft clot. The soft clot is converted into the hard clot by factor XIIIA which catalyzes the epsilon-(gamma-glutamyl)lysine cross-linking between gamma chains (stronger) and between alpha chains (weaker) of different monomers.

It is found in the secreted. In terms of biological role, together with fibrinogen alpha (FGA) and fibrinogen beta (FGB), polymerizes to form an insoluble fibrin matrix. Has a major function in hemostasis as one of the primary components of blood clots. In addition, functions during the early stages of wound repair to stabilize the lesion and guide cell migration during re-epithelialization. Was originally thought to be essential for platelet aggregation, based on in vitro studies using anticoagulated blood. However, subsequent studies have shown that it is not absolutely required for thrombus formation in vivo. Enhances expression of SELP in activated platelets via an ITGB3-dependent pathway. Maternal fibrinogen is essential for successful pregnancy. Fibrin deposition is also associated with infection, where it protects against IFNG-mediated hemorrhage. May also facilitate the antibacterial immune response via both innate and T-cell mediated pathways. This is Fibrinogen gamma chain (Fgg) from Rattus norvegicus (Rat).